The chain runs to 296 residues: MIIHPNFDPVAIHLGPLAVRWYGLMYLVGFIAAIVVGRIRLKLPYVAAQGWTAKDIDDMMFYGVLGTVLGGRLGYVLFYKADFYFSHPLDVFKVWEGGMSFHGGFLGVTLAMMLFAWQRKRHWLQVTDFVAPMVPLGLAAGRLGNFINGELWGRVTDPTAPWAMLFPGAMRDDAAWLPKHPELVEKWHLADVFMQYQMLPRHPSQLYEIALEGIALFFVLFLFARKPRPMGAISALFLIGYGLARFTVEFAREPDDFLGLLALGLSMGQWLSLPMILAGIAMMVWAYRRRAANAAA.

Helical transmembrane passes span 17–37, 59–79, 97–117, 129–149, 204–224, 230–250, and 257–277; these read LAVRWYGLMYLVGFIAAIVVG, MMFYGVLGTVLGGRLGYVLFY, GGMSFHGGFLGVTLAMMLFAW, FVAPMVPLGLAAGRLGNFING, SQLYEIALEGIALFFVLFLFA, MGAISALFLIGYGLARFTVEF, and FLGLLALGLSMGQWLSLPMIL. Arg-142 serves as a coordination point for a 1,2-diacyl-sn-glycero-3-phospho-(1'-sn-glycerol).

Belongs to the Lgt family.

It is found in the cell inner membrane. It catalyses the reaction L-cysteinyl-[prolipoprotein] + a 1,2-diacyl-sn-glycero-3-phospho-(1'-sn-glycerol) = an S-1,2-diacyl-sn-glyceryl-L-cysteinyl-[prolipoprotein] + sn-glycerol 1-phosphate + H(+). It participates in protein modification; lipoprotein biosynthesis (diacylglyceryl transfer). In terms of biological role, catalyzes the transfer of the diacylglyceryl group from phosphatidylglycerol to the sulfhydryl group of the N-terminal cysteine of a prolipoprotein, the first step in the formation of mature lipoproteins. The chain is Phosphatidylglycerol--prolipoprotein diacylglyceryl transferase from Burkholderia cenocepacia (strain HI2424).